A 117-amino-acid polypeptide reads, in one-letter code: Large ribosomal subunit protein bL19 (117 aa).

It belongs to the bacterial ribosomal protein bL19 family.

In terms of biological role, this protein is located at the 30S-50S ribosomal subunit interface and may play a role in the structure and function of the aminoacyl-tRNA binding site. The polypeptide is Large ribosomal subunit protein bL19 (Bacteroides thetaiotaomicron (strain ATCC 29148 / DSM 2079 / JCM 5827 / CCUG 10774 / NCTC 10582 / VPI-5482 / E50)).